A 252-amino-acid chain; its full sequence is NAP1-related protein 2 (252 aa).

Basic and acidic residues predominate over residues 1-15 (MTAPADKGKKAKTDA). Positions 1–23 (MTAPADKGKKAKTDADGGAAEEN) are disordered. The stretch at 26–67 (IDGALVLSIEKLQEIQDELEKVNEEASDKVLEVEQKYSEIRR) forms a coiled coil. The disordered stretch occupies residues 222–252 (YFNNEAEELGEDDDEEGSDADEGEEDEEEEN). The segment covering 226-252 (EAEELGEDDDEEGSDADEGEEDEEEEN) has biased composition (acidic residues).

It belongs to the nucleosome assembly protein (NAP) family.

It localises to the nucleus. The protein resides in the cytoplasm. Acts as a histone H2A/H2B chaperone in nucleosome assembly. This is NAP1-related protein 2 from Oryza sativa subsp. indica (Rice).